The sequence spans 425 residues: NAC domain-containing protein 10 (425 aa).

Positions 1–10 are enriched in polar residues; sequence MESPDSSSGS. Positions 1–34 are disordered; that stretch reads MESPDSSSGSAPPRVLRRQQQQPGSAPELPPGFR. The span at 12-23 shows a compositional bias: low complexity; that stretch reads PPRVLRRQQQQP. One can recognise an NAC domain in the interval 29 to 200; the sequence is LPPGFRFHPT…DWVLCRIYKK (172 aa). The DNA-binding element occupies 129–206; it reads VGVKKALVFY…IYKKTNKAGA (78 aa).

In terms of tissue distribution, highest expression in stamens. Expressed in leaves.

The protein localises to the nucleus. Its function is as follows. Transcription factor of the NAC family associated with male fertility. Involved in anther development, but not in senescence. Reduced expression of NAC5 via RNAi leads to male-sterility. This Oryza sativa subsp. japonica (Rice) protein is NAC domain-containing protein 10.